The chain runs to 202 residues: Dephospho-CoA kinase (202 aa).

Residues 3–200 (TIGLTGGIGS…QRYLTLAANR (198 aa)) form the DPCK domain. 11–16 (GSGKSA) contributes to the ATP binding site.

It belongs to the CoaE family.

The protein localises to the cytoplasm. The catalysed reaction is 3'-dephospho-CoA + ATP = ADP + CoA + H(+). Its pathway is cofactor biosynthesis; coenzyme A biosynthesis; CoA from (R)-pantothenate: step 5/5. Its function is as follows. Catalyzes the phosphorylation of the 3'-hydroxyl group of dephosphocoenzyme A to form coenzyme A. The chain is Dephospho-CoA kinase from Thiobacillus denitrificans (strain ATCC 25259 / T1).